We begin with the raw amino-acid sequence, 513 residues long: Probable DNA ligase (513 aa).

Glutamate 215 contacts ATP. Lysine 217 (N6-AMP-lysine intermediate) is an active-site residue. ATP-binding residues include arginine 222, arginine 237, glutamate 266, phenylalanine 306, arginine 378, and lysine 384.

Belongs to the ATP-dependent DNA ligase family. Mg(2+) is required as a cofactor.

The catalysed reaction is ATP + (deoxyribonucleotide)n-3'-hydroxyl + 5'-phospho-(deoxyribonucleotide)m = (deoxyribonucleotide)n+m + AMP + diphosphate.. DNA ligase that seals nicks in double-stranded DNA during DNA replication, DNA recombination and DNA repair. This Mycobacterium marinum (strain ATCC BAA-535 / M) protein is Probable DNA ligase.